Consider the following 231-residue polypeptide: Histidine biosynthesis bifunctional protein HisIE (231 aa).

The phosphoribosyl-AMP cyclohydrolase stretch occupies residues 1-130 (MQDVFRQIDW…QKYPIGVYHI (130 aa)). Residues 131–231 (LDDLYHIIEQ…GIEEKASRKH (101 aa)) form a phosphoribosyl-ATP pyrophosphohydrolase region.

It in the N-terminal section; belongs to the PRA-CH family. In the C-terminal section; belongs to the PRA-PH family.

It is found in the cytoplasm. The catalysed reaction is 1-(5-phospho-beta-D-ribosyl)-ATP + H2O = 1-(5-phospho-beta-D-ribosyl)-5'-AMP + diphosphate + H(+). It catalyses the reaction 1-(5-phospho-beta-D-ribosyl)-5'-AMP + H2O = 1-(5-phospho-beta-D-ribosyl)-5-[(5-phospho-beta-D-ribosylamino)methylideneamino]imidazole-4-carboxamide. It participates in amino-acid biosynthesis; L-histidine biosynthesis; L-histidine from 5-phospho-alpha-D-ribose 1-diphosphate: step 2/9. Its pathway is amino-acid biosynthesis; L-histidine biosynthesis; L-histidine from 5-phospho-alpha-D-ribose 1-diphosphate: step 3/9. In Helicobacter hepaticus (strain ATCC 51449 / 3B1), this protein is Histidine biosynthesis bifunctional protein HisIE.